The chain runs to 67 residues: DNA-directed RNA polymerase subunit omega (67 aa).

The protein belongs to the RNA polymerase subunit omega family. In terms of assembly, the RNAP catalytic core consists of 2 alpha, 1 beta, 1 beta' and 1 omega subunit. When a sigma factor is associated with the core the holoenzyme is formed, which can initiate transcription.

The enzyme catalyses RNA(n) + a ribonucleoside 5'-triphosphate = RNA(n+1) + diphosphate. In terms of biological role, promotes RNA polymerase assembly. Latches the N- and C-terminal regions of the beta' subunit thereby facilitating its interaction with the beta and alpha subunits. The chain is DNA-directed RNA polymerase subunit omega from Polaromonas naphthalenivorans (strain CJ2).